A 176-amino-acid chain; its full sequence is ADP-ribosylation factor-like protein 11 (176 aa).

The N-myristoyl glycine moiety is linked to residue Gly-2. Residues 19 to 26 (GLDSAGKT), 63 to 67 (DIGGQ), and 122 to 125 (NKQE) each bind GTP.

Belongs to the small GTPase superfamily. Arf family.

In terms of biological role, may play a role in apoptosis. May act as a tumor suppressor. This chain is ADP-ribosylation factor-like protein 11 (Arl11), found in Mus musculus (Mouse).